We begin with the raw amino-acid sequence, 217 residues long: 3-dehydroquinate dehydratase (217 aa).

Residues 26 to 28 and R59 contribute to the 3-dehydroquinate site; that span reads EFR. H114 serves as the catalytic Proton donor/acceptor. The active-site Schiff-base intermediate with substrate is the K140. 3-dehydroquinate-binding residues include R178 and Q201.

This sequence belongs to the type-I 3-dehydroquinase family. In terms of assembly, homodimer.

The catalysed reaction is 3-dehydroquinate = 3-dehydroshikimate + H2O. It functions in the pathway metabolic intermediate biosynthesis; chorismate biosynthesis; chorismate from D-erythrose 4-phosphate and phosphoenolpyruvate: step 3/7. In terms of biological role, involved in the third step of the chorismate pathway, which leads to the biosynthesis of aromatic amino acids. Catalyzes the cis-dehydration of 3-dehydroquinate (DHQ) and introduces the first double bond of the aromatic ring to yield 3-dehydroshikimate. In Hydrogenobaculum sp. (strain Y04AAS1), this protein is 3-dehydroquinate dehydratase.